The following is a 310-amino-acid chain: Methionyl-tRNA formyltransferase (310 aa).

A (6S)-5,6,7,8-tetrahydrofolate-binding site is contributed by serine 109–proline 112.

It belongs to the Fmt family.

The catalysed reaction is L-methionyl-tRNA(fMet) + (6R)-10-formyltetrahydrofolate = N-formyl-L-methionyl-tRNA(fMet) + (6S)-5,6,7,8-tetrahydrofolate + H(+). Attaches a formyl group to the free amino group of methionyl-tRNA(fMet). The formyl group appears to play a dual role in the initiator identity of N-formylmethionyl-tRNA by promoting its recognition by IF2 and preventing the misappropriation of this tRNA by the elongation apparatus. The protein is Methionyl-tRNA formyltransferase of Parvibaculum lavamentivorans (strain DS-1 / DSM 13023 / NCIMB 13966).